The following is a 338-amino-acid chain: Ketol-acid reductoisomerase (NADP(+)) (338 aa).

One can recognise a KARI N-terminal Rossmann domain in the interval 1-181 (MKIYYDKDCN…GGGKAGIIET (181 aa)). Residues 24–27 (YGSQ), lysine 47, serine 50, serine 52, and 82–85 (DEIQ) each bind NADP(+). The active site involves histidine 107. Glycine 133 is an NADP(+) binding site. A KARI C-terminal knotted domain is found at 182–327 (SFKEETETDL…ARLRSMMAWI (146 aa)). Residues aspartate 190, glutamate 194, glutamate 226, and glutamate 230 each coordinate Mg(2+). Serine 251 provides a ligand contact to substrate.

Belongs to the ketol-acid reductoisomerase family. Requires Mg(2+) as cofactor.

It carries out the reaction (2R)-2,3-dihydroxy-3-methylbutanoate + NADP(+) = (2S)-2-acetolactate + NADPH + H(+). The enzyme catalyses (2R,3R)-2,3-dihydroxy-3-methylpentanoate + NADP(+) = (S)-2-ethyl-2-hydroxy-3-oxobutanoate + NADPH + H(+). The protein operates within amino-acid biosynthesis; L-isoleucine biosynthesis; L-isoleucine from 2-oxobutanoate: step 2/4. Its pathway is amino-acid biosynthesis; L-valine biosynthesis; L-valine from pyruvate: step 2/4. Functionally, involved in the biosynthesis of branched-chain amino acids (BCAA). Catalyzes an alkyl-migration followed by a ketol-acid reduction of (S)-2-acetolactate (S2AL) to yield (R)-2,3-dihydroxy-isovalerate. In the isomerase reaction, S2AL is rearranged via a Mg-dependent methyl migration to produce 3-hydroxy-3-methyl-2-ketobutyrate (HMKB). In the reductase reaction, this 2-ketoacid undergoes a metal-dependent reduction by NADPH to yield (R)-2,3-dihydroxy-isovalerate. The sequence is that of Ketol-acid reductoisomerase (NADP(+)) from Geotalea uraniireducens (strain Rf4) (Geobacter uraniireducens).